We begin with the raw amino-acid sequence, 372 residues long: Heterogeneous nuclear rnp K-like protein 2 (372 aa).

The segment covering 1–23 has biased composition (polar residues); that stretch reads MSDINDPNSISLPVGSSCTSRGA. The segment at 1-49 is disordered; it reads MSDINDPNSISLPVGSSCTSRGASTETFTTSRSTTLFSSQQESKDEGNV. The segment covering 24-39 has biased composition (low complexity); sequence STETFTTSRSTTLFSS. KH domains follow at residues 59–123, 167–232, and 283–354; these read TINH…LGQI, IGTS…LLQI, and EFKA…ESML.

This sequence belongs to the HEK2 family. In terms of assembly, binds RNA.

It localises to the cytoplasm. It is found in the P-body. The protein localises to the nucleus. Its subcellular location is the chromosome. The protein resides in the telomere. Functionally, RNA-binding protein involved in the correct localization of transcripts in the cell. RNA localization is a widespread mechanism for achieving localized protein synthesis. Involved in structural and functional organization of telomeric chromatin and regulates silencing at the HMR locus. This Zygosaccharomyces rouxii (strain ATCC 2623 / CBS 732 / NBRC 1130 / NCYC 568 / NRRL Y-229) protein is Heterogeneous nuclear rnp K-like protein 2 (HEK2).